Here is a 432-residue protein sequence, read N- to C-terminus: Myb family transcription factor EFM (432 aa).

Positions 36–81 (LEDLLSRLEQERLKIDAFKRELPLCMQLLNNAVEVYKQQLEAYRAN) form a coiled coil. Polar residues-rich tracts occupy residues 123 to 139 (SQSETKPKNIDSTTDQS) and 187 to 197 (SPTNEHTNGQD). The segment at 123-237 (SQSETKPKNI…SQSNRKARRC (115 aa)) is disordered. Over residues 201-231 (ESMINNDNNYNNNNNNNSNSNGVSSTTSQSN) the composition is skewed to low complexity. An HTH myb-type domain is found at 230–290 (SNRKARRCWS…HLQKYRLHTR (61 aa)). Positions 261–286 (PKQIRELMKVDGLTNDEVKSHLQKYR) form a DNA-binding region, H-T-H motif. The segment at 354-412 (FYTTPPPPQPLHHHHFQTFNGSSGGTASTDSTHHQVTDSPTVEGKSPESGGGERKGLAA) is disordered.

Interacts with JMJ30, but not with SVP, FLC or CO. In terms of tissue distribution, specifically expressed in vascular tissues of cotyledons, rosette leaves and cauline leaves. Not detected in the vegetative shoot apical meristem.

Its subcellular location is the nucleus. Its function is as follows. Transcription factor acting as a flowering repressor, directly repressing FT expression in a dosage-dependent manner in the leaf vasculature. The chain is Myb family transcription factor EFM from Arabidopsis thaliana (Mouse-ear cress).